The following is a 151-amino-acid chain: Transcriptional regulator MraZ (151 aa).

SpoVT-AbrB domains lie at Glu7–Glu53 and Ile82–Leu125.

This sequence belongs to the MraZ family. As to quaternary structure, forms oligomers.

The protein localises to the cytoplasm. Its subcellular location is the nucleoid. This is Transcriptional regulator MraZ from Cytophaga hutchinsonii (strain ATCC 33406 / DSM 1761 / CIP 103989 / NBRC 15051 / NCIMB 9469 / D465).